A 517-amino-acid chain; its full sequence is Sphingolipid C9-methyltransferase A (517 aa).

2 helical membrane-spanning segments follow: residues 58 to 78 (LLIL…GGGL) and 80 to 100 (TTIF…WSIA). S-adenosyl-L-methionine is bound by residues 223-224 (YT), 286-291 (TLGRNQ), and 316-317 (YR). N-linked (GlcNAc...) asparagine glycosylation occurs at asparagine 290. Asparagine 478 carries N-linked (GlcNAc...) asparagine glycosylation.

Belongs to the CFA/CMAS family.

It is found in the membrane. The catalysed reaction is a (4E,8E)-4-sphinga-4,8-dienine ceramide + S-adenosyl-L-methionine = a 9-methyl-(4E,8E)-sphinga-4,8-dienine ceramide + S-adenosyl-L-homocysteine + H(+). It functions in the pathway lipid metabolism; sphingolipid metabolism. Catalyzes methylation of the sphingoid base component of glucosylceramides (GluCers) at the C9-position. Sphingolipid C9-methylation requires 4,8-desaturated ceramides as substrates. Glucosylceramides play important roles in growth, differentiation and pathogenicity. The methyl group at the C9-position distinguishes fungal glucosylceramides from those of plants and animals and may thus play a role in host-pathogen interactions enabling the host to recognize the fungal attack and initiate specific defense responses. This Emericella nidulans (strain FGSC A4 / ATCC 38163 / CBS 112.46 / NRRL 194 / M139) (Aspergillus nidulans) protein is Sphingolipid C9-methyltransferase A.